The primary structure comprises 553 residues: Arylsulfatase K (553 aa).

Residues 1–16 (MLLLLVSVVAALALAA) form the signal peptide. 2 residues coordinate Ca(2+): Asp40 and Cys80. The active-site Nucleophile is Cys80. Residue Cys80 is modified to 3-oxoalanine (Cys). Residue Asn108 is glycosylated (N-linked (GlcNAc...) asparagine). Lys128 is a substrate binding site. Residue Asn191 is glycosylated (N-linked (GlcNAc...) asparagine). A substrate-binding site is contributed by His249. A glycan (N-linked (GlcNAc...) asparagine) is linked at Asn260. The Ca(2+) site is built by Asp311 and His312. Asn373, Asn411, and Asn496 each carry an N-linked (GlcNAc...) asparagine glycan. The disordered stretch occupies residues 530–553 (SPLASSPTQSTSGSQPTLPQSTSG). A compositionally biased stretch (low complexity) spans 534 to 553 (SSPTQSTSGSQPTLPQSTSG).

The protein belongs to the sulfatase family. It depends on Ca(2+) as a cofactor. Post-translationally, the conversion to 3-oxoalanine (also known as C-formylglycine, FGly), of a serine or cysteine residue in prokaryotes and of a cysteine residue in eukaryotes, is critical for catalytic activity. In terms of processing, the 75-kDa precursor undergoes proteolytic processing to yield a 23 kDa form. N-glycosylated with both high mannose and complex type sugars.

The protein resides in the secreted. It localises to the lysosome. It carries out the reaction an aryl sulfate + H2O = a phenol + sulfate + H(+). The enzyme catalyses Hydrolysis of the 2-sulfate groups of the 2-O-sulfo-D-glucuronate residues of chondroitin sulfate, heparin and heparitin sulfate.. Functionally, catalyzes the hydrolysis of pseudosubstrates such as p-nitrocatechol sulfate and p-nitrophenyl sulfate. Catalyzes the hydrolysis of the 2-sulfate groups of the 2-O-sulfo-D-glucuronate residues of chondroitin sulfate, heparin and heparitin sulfate. Acts selectively on 2-sulfoglucuronate and lacks activity against 2-sulfoiduronate. The protein is Arylsulfatase K (Arsk) of Mus musculus (Mouse).